Consider the following 338-residue polypeptide: Aspartate--ammonia ligase (338 aa).

This sequence belongs to the class-II aminoacyl-tRNA synthetase family. AsnA subfamily.

It localises to the cytoplasm. The enzyme catalyses L-aspartate + NH4(+) + ATP = L-asparagine + AMP + diphosphate + H(+). The protein operates within amino-acid biosynthesis; L-asparagine biosynthesis; L-asparagine from L-aspartate (ammonia route): step 1/1. This Lactobacillus delbrueckii subsp. bulgaricus (strain ATCC BAA-365 / Lb-18) protein is Aspartate--ammonia ligase.